Reading from the N-terminus, the 127-residue chain is Large-conductance mechanosensitive channel (127 aa).

3 helical membrane passes run 9-29, 32-52, and 75-95; these read EFAM…GVAF, IVTA…LGGI, and VIDF…INLL.

This sequence belongs to the MscL family. In terms of assembly, homopentamer.

It localises to the cell inner membrane. Functionally, channel that opens in response to stretch forces in the membrane lipid bilayer. May participate in the regulation of osmotic pressure changes within the cell. This Legionella pneumophila subsp. pneumophila (strain Philadelphia 1 / ATCC 33152 / DSM 7513) protein is Large-conductance mechanosensitive channel.